The primary structure comprises 409 residues: LL-diaminopimelate aminotransferase (409 aa).

Substrate-binding residues include tyrosine 15 and glycine 42. Pyridoxal 5'-phosphate contacts are provided by residues tyrosine 72, alanine 108–lysine 109, tyrosine 132, asparagine 186, tyrosine 217, and serine 245–serine 247. Residues lysine 109, tyrosine 132, and asparagine 186 each coordinate substrate. Lysine 248 is subject to N6-(pyridoxal phosphate)lysine. Arginine 256 and asparagine 291 together coordinate pyridoxal 5'-phosphate. Asparagine 291 and arginine 387 together coordinate substrate.

Belongs to the class-I pyridoxal-phosphate-dependent aminotransferase family. LL-diaminopimelate aminotransferase subfamily. As to quaternary structure, homodimer. Pyridoxal 5'-phosphate is required as a cofactor.

It catalyses the reaction (2S,6S)-2,6-diaminopimelate + 2-oxoglutarate = (S)-2,3,4,5-tetrahydrodipicolinate + L-glutamate + H2O + H(+). Its pathway is amino-acid biosynthesis; L-lysine biosynthesis via DAP pathway; LL-2,6-diaminopimelate from (S)-tetrahydrodipicolinate (aminotransferase route): step 1/1. In terms of biological role, involved in the synthesis of meso-diaminopimelate (m-DAP or DL-DAP), required for both lysine and peptidoglycan biosynthesis. Catalyzes the direct conversion of tetrahydrodipicolinate to LL-diaminopimelate. The sequence is that of LL-diaminopimelate aminotransferase from Parabacteroides distasonis (strain ATCC 8503 / DSM 20701 / CIP 104284 / JCM 5825 / NCTC 11152).